A 303-amino-acid polypeptide reads, in one-letter code: MSSRQNQQSSSQHSSSSQQGGQGGQGVQGSSSYSRTEVHTSSGGPTIGGAQRTVPVPPGSHSEVHEEREVIKHGTKTESETHVVTVPVTTFGSTNMESVRTGFTVTQDKNLTVAAPNIAAPIHSNLDLNLGGGARAEITAGTTVDLSKIQRKDLGPEEYARYKAKVEQLARQDEQDAGMRAAQYREEVERDAELIRQILERQHIRDLEFRKEMVENQVNRQEREIQLEAEYAMRALELERNAAKEALESAKAQTNVNVKVESAIGTTVSKGAIQTSADKSSTTKTGPTTVTQIKHTEQHTERR.

Over residues 1 to 19 (MSSRQNQQSSSQHSSSSQQ) the composition is skewed to low complexity. The disordered stretch occupies residues 1-67 (MSSRQNQQSS…PGSHSEVHEE (67 aa)). Residues 170-257 (ARQDEQDAGM…ESAKAQTNVN (88 aa)) are a coiled coil. CAHS motif regions lie at residues 184–202 (YREE…LERQ) and 221–239 (QERE…LELE). Over residues 270–280 (KGAIQTSADKS) the composition is skewed to polar residues. A disordered region spans residues 270–303 (KGAIQTSADKSSTTKTGPTTVTQIKHTEQHTERR). The segment covering 282–291 (TTKTGPTTVT) has biased composition (low complexity). Positions 294–303 (KHTEQHTERR) are enriched in basic and acidic residues.

It belongs to the Cytosolic-abundant heat soluble protein (CAHS) family.

The protein localises to the cytoplasm. Functionally, CAHS proteins are cytosolic heat soluble proteins that seem to contribute to the anhydrobiosis in tardigrades, but their specific mechanisms are yet to be identified. It is possible that protection during anhydrobiosis might occur via the stabilization of vitrifying small molecules such as sugars, but not via the direct glass transition of CAHS proteins themselves. In Ramazzottius varieornatus (Water bear), this protein is Cytosolic-abundant heat soluble protein 3.